The chain runs to 156 residues: Small ribosomal subunit protein uS7 (156 aa).

The protein belongs to the universal ribosomal protein uS7 family. Part of the 30S ribosomal subunit. Contacts proteins S9 and S11.

In terms of biological role, one of the primary rRNA binding proteins, it binds directly to 16S rRNA where it nucleates assembly of the head domain of the 30S subunit. Is located at the subunit interface close to the decoding center, probably blocks exit of the E-site tRNA. The chain is Small ribosomal subunit protein uS7 from Dehalococcoides mccartyi (strain ATCC BAA-2266 / KCTC 15142 / 195) (Dehalococcoides ethenogenes (strain 195)).